Here is a 61-residue protein sequence, read N- to C-terminus: Small ribosomal subunit protein uS14 (61 aa).

The Zn(2+) site is built by cysteine 24, cysteine 27, cysteine 40, and cysteine 43.

It belongs to the universal ribosomal protein uS14 family. Zinc-binding uS14 subfamily. As to quaternary structure, part of the 30S ribosomal subunit. Contacts proteins S3 and S10. Requires Zn(2+) as cofactor.

Binds 16S rRNA, required for the assembly of 30S particles and may also be responsible for determining the conformation of the 16S rRNA at the A site. The polypeptide is Small ribosomal subunit protein uS14 (Desulforamulus reducens (strain ATCC BAA-1160 / DSM 100696 / MI-1) (Desulfotomaculum reducens)).